The chain runs to 142 residues: Probable histone H2AXb (142 aa).

Positions 1-12 (MSSGAGSGTTKG) are enriched in gly residues. The interval 1 to 28 (MSSGAGSGTTKGGRGKPKATKSVSRSSK) is disordered. The residue at position 139 (S139) is a Phosphoserine; by ATM and ATR. Positions 139–140 (SQ) match the [ST]-Q motif motif.

Belongs to the histone H2A family. In terms of assembly, the nucleosome is a histone octamer containing two molecules each of H2A, H2B, H3 and H4 assembled in one H3-H4 heterotetramer and two H2A-H2B heterodimers. The octamer wraps approximately 147 bp of DNA. Interacts with numerous proteins required for DNA damage signaling and repair when phosphorylated on Ser-139. Post-translationally, phosphorylated to form H2AXS139ph (gamma-H2AX) in response to DNA double strand breaks (DSBs) generated by exogenous genotoxic agents and by stalled replication forks, and may also occur during meiotic recombination events. Phosphorylation can extend up to several thousand nucleosomes from the actual site of the DSB and may mark the surrounding chromatin for recruitment of proteins required for DNA damage signaling and repair. Widespread phosphorylation may also serve to amplify the damage signal or aid repair of persistent lesions. H2AXS139ph in response to ionizing radiation is mediated by ATM while defects in DNA replication induce H2AXS139ph subsequent to activation of ATR. Dephosphorylation of H2AXS139ph by PP2A is required for DNA DSB repair. In terms of tissue distribution, expressed in meristems and dividing cells.

The protein resides in the nucleus. It localises to the chromosome. Its function is as follows. Variant histone H2A which replaces conventional H2A in a subset of nucleosomes. Nucleosomes wrap and compact DNA into chromatin, limiting DNA accessibility to the cellular machineries which require DNA as a template. Histones thereby play a central role in transcription regulation, DNA repair, DNA replication and chromosomal stability. DNA accessibility is regulated via a complex set of post-translational modifications of histones, also called histone code, and nucleosome remodeling. Required for checkpoint-mediated arrest of cell cycle progression in response to low doses of ionizing radiation and for efficient repair of DNA double strand breaks (DSBs) specifically when modified by C-terminal phosphorylation. This Arabidopsis thaliana (Mouse-ear cress) protein is Probable histone H2AXb.